Consider the following 687-residue polypeptide: POZ (BTB) and AT hook-containing zinc finger 1 (687 aa).

The region spanning 41 to 130 (CDVLLRVGDE…AYTSRIVVRL (90 aa)) is the BTB domain. Residues 250-260 (PFPNVASSAPP) show a composition bias toward polar residues. The segment at 250–279 (PFPNVASSAPPLTSKRGRGRPRKANLLDSM) is disordered. Residues 292–314 (LPCGLCGKVFTDANRLRQHEAQH) form a C2H2-type 1 zinc finger. Residues 332 to 351 (GENGLPISEDPDGPRKRSRT) form a disordered region. 5 C2H2-type zinc fingers span residues 355–377 (VACEICGKIFRDVYHLNRHKLSH), 383–405 (YSCPVCGLRFKRKDRMSYHVRSH), 413–436 (YICQSCGKGFSRPDHLNGHIKQVH), 442–464 (HKCQTCNASFATRDRLRSHLACH), and 495–517 (NFCSICNRGFSSASYLKVHVKTH). The segment at 564 to 587 (SYGDLSDASDLKTPEKQSANGSFS) is disordered. Residues 605–628 (YPCPECGSFFRSKSYLNKHIQKVH) form a C2H2-type 7 zinc finger.

In terms of assembly, homodimer. Interacts with RNF4. Interacts (via C-terminus) with TP53; this interaction inhibits TP53 ability to activate transcription. As to expression, widely expressed at high levels during embryogenesis, especially in the central nervous system, especially to the actively proliferating neuroblasts in the periventricular neocortical neuroepithelium, in the telencephalic cortical plate and in the hippocampus. Also expressed in a stage-specific manner in the mouse germinal epithelium. While strongly expressed during brain development,m its expression turns down in adult brain.

The protein localises to the nucleus. Functionally, transcriptional regulator that plays a role in many biological processes such as embryogenesis, senescence, T-cell development or neurogenesis. Interacts with the TP53 protein to control genes that are important in proliferation and in the DNA-damage response. Mechanistically, the interaction inhibits the DNA binding and transcriptional activity of TP53/p53. Part of the transcriptional network modulating regulatory T-cell development and controls the generation of the regulatory T-cell pool under homeostatic conditions. The chain is POZ (BTB) and AT hook-containing zinc finger 1 from Mus musculus (Mouse).